The following is a 476-amino-acid chain: MSPPSDDAGPGPPRTLSLAARLSFAVGHFLNDLCAGMWFTYLLLFLHSVRGYSSRGAGLLLLLGQVADGLCTPLVGYEADRASCVRCGPRKAWHLAGTVCVLLSFPFIFSPCLGCGEATPEWAALLYYGPFIVVFQFGWAATQIAHLSLIPELVTSDHEKVELTALRYAFTVVANITVYGAAWLLLHLQGSAHGEQDISVGDQLGVQDVPVFRNLALLVVGVGAIFSLLFHLGTKEGHRSQHWGNEPNEHTPLVAPAAQPLLLWKHWLREPAFYQVGMLYMTTRLIVNLSQTYIAMYLTYSLSLPKKFIATIPLVMYLSGFFSSFLMKPVNRRIGRNMTYFTGLLVILAFAAWVALADNLGVAVYGAAVLLGAGCATILVTSLAMTADLIGPHTHSGAFVYGAMSFSDKVANGLAVMAVQSLHPCPSELCCGACISFYHWVMTAVTGGVGVAAALALCSLLIWPIRIRNRDPRDRP.

An N-acetylmethionine modification is found at Met-1. At 1-25 the chain is on the cytoplasmic side; sequence MSPPSDDAGPGPPRTLSLAARLSFA. Residues 26–46 traverse the membrane as a helical segment; it reads VGHFLNDLCAGMWFTYLLLFL. Over 47–55 the chain is Lumenal; the sequence is HSVRGYSSR. The chain crosses the membrane as a helical span at residues 56–76; it reads GAGLLLLLGQVADGLCTPLVG. Residues 77–94 are Cytoplasmic-facing; that stretch reads YEADRASCVRCGPRKAWH. A helical membrane pass occupies residues 95-115; that stretch reads LAGTVCVLLSFPFIFSPCLGC. Topologically, residues 116 to 121 are lumenal; sequence GEATPE. A helical membrane pass occupies residues 122-142; it reads WAALLYYGPFIVVFQFGWAAT. The Cytoplasmic portion of the chain corresponds to 143-167; the sequence is QIAHLSLIPELVTSDHEKVELTALR. Residues 168–188 traverse the membrane as a helical segment; that stretch reads YAFTVVANITVYGAAWLLLHL. Topologically, residues 189-213 are lumenal; the sequence is QGSAHGEQDISVGDQLGVQDVPVFR. A helical membrane pass occupies residues 214-234; that stretch reads NLALLVVGVGAIFSLLFHLGT. Residues 235 to 284 are Cytoplasmic-facing; the sequence is KEGHRSQHWGNEPNEHTPLVAPAAQPLLLWKHWLREPAFYQVGMLYMTTR. Thr-251 bears the Phosphothreonine mark. Residues 285–305 traverse the membrane as a helical segment; that stretch reads LIVNLSQTYIAMYLTYSLSLP. Position 306 (Lys-306) is a topological domain, lumenal. A helical membrane pass occupies residues 307–327; it reads KFIATIPLVMYLSGFFSSFLM. The Cytoplasmic segment spans residues 328-343; it reads KPVNRRIGRNMTYFTG. Helical transmembrane passes span 344–364 and 365–385; these read LLVI…GVAV and YGAA…SLAM. Over 386–398 the chain is Cytoplasmic; the sequence is TADLIGPHTHSGA. The helical transmembrane segment at 399-419 threads the bilayer; that stretch reads FVYGAMSFSDKVANGLAVMAV. Topologically, residues 420 to 444 are lumenal; the sequence is QSLHPCPSELCCGACISFYHWVMTA. Residues 445–465 form a helical membrane-spanning segment; the sequence is VTGGVGVAAALALCSLLIWPI. Topologically, residues 466–476 are cytoplasmic; it reads RIRNRDPRDRP.

The protein belongs to the major facilitator superfamily. Post-translationally, phosphorylation at Thr-251 by MTOR via mTORC1 pathway promotes cysteine transport in lysosomes, thereby regulating lysosomal cysteine and cystine storage and redox homeostasis.

It is found in the melanosome membrane. The protein resides in the lysosome membrane. It catalyses the reaction L-cysteine(in) = L-cysteine(out). Its function is as follows. Transporter that mediates the import of cysteine into melanosomes, thereby regulating skin/hair pigmentation. In melanosomes, cysteine import is required both for normal levels of cystine, the oxidized dimer of cysteine, and provide cysteine for the production of the cysteinyldopas used in pheomelanin synthesis, thereby regulating skin/hair pigmentation. Also catalyzes import of cysteine into lysosomes in non-pigmented cells, regulating lysosomal cystine and cysteine storage, which is essnetial for redox homeostasis. This chain is Major facilitator superfamily domain-containing protein 12, found in Mus musculus (Mouse).